The following is a 258-amino-acid chain: Imidazole glycerol phosphate synthase subunit HisF (258 aa).

Residues Asp-11 and Asp-130 contribute to the active site.

The protein belongs to the HisA/HisF family. As to quaternary structure, heterodimer of HisH and HisF.

It is found in the cytoplasm. The enzyme catalyses 5-[(5-phospho-1-deoxy-D-ribulos-1-ylimino)methylamino]-1-(5-phospho-beta-D-ribosyl)imidazole-4-carboxamide + L-glutamine = D-erythro-1-(imidazol-4-yl)glycerol 3-phosphate + 5-amino-1-(5-phospho-beta-D-ribosyl)imidazole-4-carboxamide + L-glutamate + H(+). It participates in amino-acid biosynthesis; L-histidine biosynthesis; L-histidine from 5-phospho-alpha-D-ribose 1-diphosphate: step 5/9. IGPS catalyzes the conversion of PRFAR and glutamine to IGP, AICAR and glutamate. The HisF subunit catalyzes the cyclization activity that produces IGP and AICAR from PRFAR using the ammonia provided by the HisH subunit. The sequence is that of Imidazole glycerol phosphate synthase subunit HisF from Yersinia pseudotuberculosis serotype IB (strain PB1/+).